The primary structure comprises 409 residues: LL-diaminopimelate aminotransferase (409 aa).

Residues Tyr15 and Gly42 each coordinate substrate. Residues Tyr72, 108-109 (AK), Tyr132, Asn186, Tyr217, and 245-247 (SFS) each bind pyridoxal 5'-phosphate. Substrate-binding residues include Lys109, Tyr132, and Asn186. Position 248 is an N6-(pyridoxal phosphate)lysine (Lys248). Pyridoxal 5'-phosphate is bound by residues Arg256 and Asn291. Substrate-binding residues include Asn291 and Arg387.

This sequence belongs to the class-I pyridoxal-phosphate-dependent aminotransferase family. LL-diaminopimelate aminotransferase subfamily. As to quaternary structure, homodimer. Requires pyridoxal 5'-phosphate as cofactor.

It catalyses the reaction (2S,6S)-2,6-diaminopimelate + 2-oxoglutarate = (S)-2,3,4,5-tetrahydrodipicolinate + L-glutamate + H2O + H(+). It functions in the pathway amino-acid biosynthesis; L-lysine biosynthesis via DAP pathway; LL-2,6-diaminopimelate from (S)-tetrahydrodipicolinate (aminotransferase route): step 1/1. Its function is as follows. Involved in the synthesis of meso-diaminopimelate (m-DAP or DL-DAP), required for both lysine and peptidoglycan biosynthesis. Catalyzes the direct conversion of tetrahydrodipicolinate to LL-diaminopimelate. The chain is LL-diaminopimelate aminotransferase from Phocaeicola vulgatus (strain ATCC 8482 / DSM 1447 / JCM 5826 / CCUG 4940 / NBRC 14291 / NCTC 11154) (Bacteroides vulgatus).